The sequence spans 405 residues: CMP-sialic acid transporter 4 (405 aa).

The Cytoplasmic segment spans residues 1–43; that stretch reads MQRNGVMECSVCHSKVVAPSPRSVSRAYDKHRSKISSKYRALN. Residues 44–64 traverse the membrane as a helical segment; the sequence is FLLVSGDCILVGLQPILVFMS. Residues 65–74 lie on the Lumenal side of the membrane; that stretch reads KVDGKFQFSP. The chain crosses the membrane as a helical span at residues 75–95; the sequence is ISVNFLTEVTKVIFAIVMLII. The Cytoplasmic segment spans residues 96 to 121; it reads QSRKQKVGEKPLLSLSTFVQAARNNA. Residues 122–142 form a helical membrane-spanning segment; that stretch reads LLAVPALLYAINNYLKFIMQL. Position 143 (Tyr-143) is a topological domain, lumenal. The chain crosses the membrane as a helical span at residues 144-164; it reads FSPATVKMLSNLKVLVIAILL. At 165 to 171 the chain is on the cytoplasmic side; that stretch reads KFIMRRK. A helical transmembrane segment spans residues 172-192; it reads FSIIQWEALALLLIGISVNQL. At 193–203 the chain is on the lumenal side; it reads SSIPDGTKSFG. The helical transmembrane segment at 204-224 threads the bilayer; the sequence is LAVTTIAYIYTLIFVTVPSLA. Topologically, residues 225-244 are cytoplasmic; it reads SVYNEYALKSQFDTSIYLQN. The chain crosses the membrane as a helical span at residues 245-265; it reads LFLYGYGAIFNFLGILGTVIF. Residues 266–281 lie on the Lumenal side of the membrane; that stretch reads QGPESFDILRGHSRAT. A helical membrane pass occupies residues 282–302; it reads MFLICNNAAQGILSSFFFKYA. Over 303-322 the chain is Cytoplasmic; the sequence is DTILKKYSSTVATIFTGLAS. The helical transmembrane segment at 323-343 threads the bilayer; it reads AAFLGHTLTVNFLLGISIVFI. Residues 344 to 405 are Lumenal-facing; the sequence is SMHQFFSPLA…TDERKPLLPI (62 aa).

This sequence belongs to the nucleotide-sugar transporter family. CMP-Sialate:CMP antiporter (TC 2.A.7.12) subfamily.

The protein resides in the golgi apparatus membrane. Sugar transporter involved in the transport of CMP-sialic acid from the cytoplasm into the Golgi. May transport important nucleotide sugars such as CMP-Kdo (2-keto-3-deoxy-D-manno-octulosonic acid) in physiological conditions. This chain is CMP-sialic acid transporter 4, found in Oryza sativa subsp. japonica (Rice).